A 76-amino-acid chain; its full sequence is Theta defensin subunit B (76 aa).

Residues 1-22 (MRTFALLTAMLLLVALQPQAEA) form the signal peptide. The propeptide occupies 23–64 (RQARADEAAAQQQPGADDQGMAHSFTRPENAALPLSESAKGL). Residues 24-54 (QARADEAAAQQQPGADDQGMAHSFTRPENAA) form a disordered region. A compositionally biased stretch (low complexity) spans 30–44 (AAAQQQPGADDQGMA). A Cyclopeptide (Arg-Cys) (interchain with C-73 in subunit A); in form BTD-1 cross-link involves residue Arg65. Arg65 is covalently cross-linked (Cyclopeptide (Arg-Cys) (interchain with C-73 in subunit B); in form BTD-2). Residues Cys68 and Cys73 are joined by a disulfide bond. Cys73 participates in a covalent cross-link: Cyclopeptide (Cys-Arg) (interchain with R-65 in subunit A); in form BTD-1. Cys73 is covalently cross-linked (Cyclopeptide (Cys-Arg) (interchain with R-65 in subunit B); in form BTD-2). Residues 74 to 76 (QLL) constitute a propeptide that is removed on maturation.

It belongs to the alpha-defensin family. Theta subfamily. BTD-1 is a cyclic heterodimer composed of subunits A and B; disulfide-linked. BTD-2 is a cyclic homodimer composed of two subunits B; disulfide-linked. Post-translationally, forms a cyclic peptide with subunit A (BTD-1), or subunit B (BTD-2). An additional intersubunit disulfide bond is formed.

BTD-1 and BTD-2 have antimicrobial activity against the Gram-negative bacterium E.coli ML35, the Gram-positive bacterium S.aureus 502a, and the fungus C.albicans 16820. BTD-2 is more effective against E.coli than BTD-1. The protein is Theta defensin subunit B (BTDB) of Papio anubis (Olive baboon).